The sequence spans 337 residues: MTLPPSCRWSGDHLELLDQRQLPGAVVFMQLRRWQQVAEAISSMAVRGAPAIGIAAAWGVVLAARSGDDLLTAFRGLRASRPTAVNLRWALNRMQAAMGSSASVDVEALTDAAAALQREDCVLTQRLVDHGVSLLAQGCRVLHHCHTGAIATGGVGTALGVIAAAHARGLLRHAWLDETRPRLQGAALSAWELGCLGVPCTVIVDGASGLLMRRGEVDAVMVGCDRVSANGDVANKIGTYNLALVARAHGIPFYVCAPGSSIDRATVDGEAITIEERDAEEITHVRGMDVAAPGAQVWNPAFDITPAHLVTGFITEFGVLRPPYREVLSELPLPNQL.

Substrate is bound by residues 47-49 (RGA), Arg-81, and Gln-184. The active-site Proton donor is the Asp-225. A substrate-binding site is contributed by 235–236 (NK).

Belongs to the eIF-2B alpha/beta/delta subunits family. MtnA subfamily.

It catalyses the reaction 5-(methylsulfanyl)-alpha-D-ribose 1-phosphate = 5-(methylsulfanyl)-D-ribulose 1-phosphate. It functions in the pathway amino-acid biosynthesis; L-methionine biosynthesis via salvage pathway; L-methionine from S-methyl-5-thio-alpha-D-ribose 1-phosphate: step 1/6. In terms of biological role, catalyzes the interconversion of methylthioribose-1-phosphate (MTR-1-P) into methylthioribulose-1-phosphate (MTRu-1-P). In Synechococcus sp. (strain CC9605), this protein is Methylthioribose-1-phosphate isomerase.